A 151-amino-acid polypeptide reads, in one-letter code: Gene 55 protein (151 aa).

This is Gene 55 protein (55) from Mycobacterium phage D29 (Mycobacteriophage D29).